Here is a 907-residue protein sequence, read N- to C-terminus: Glutamate receptor 1 (907 aa).

An N-terminal signal peptide occupies residues 1–18; it reads MPYIFAFFCTGFLGAVVG. Residues 19 to 536 are Extracellular-facing; that stretch reads ANFPNNIQIG…GVFSFLDPLA (518 aa). Asn63, Asn249, Asn257, Asn363, Asn401, and Asn406 each carry an N-linked (GlcNAc...) asparagine glycan. Cys75 and Cys323 are disulfide-bonded. L-glutamate contacts are provided by Pro492, Thr494, and Arg499. The helical transmembrane segment at 537-557 threads the bilayer; the sequence is YEIWMCIVFAYIGVSVVLFLV. At 558–584 the chain is on the cytoplasmic side; the sequence is SRFSPYEWHSEEFEEGRDQTTSDQSNE. Positions 585 to 600 form an intramembrane region, helical; Pore-forming; that stretch reads FGIFNSLWFSLGAFMQ. An intramembrane segment occupies 601–603; it reads QGC. Cys603 carries S-palmitoyl cysteine lipidation. Topologically, residues 604–609 are cytoplasmic; sequence DISPRS. Residues 610–630 form a helical membrane-spanning segment; the sequence is LSGRIVGGVWWFFTLIIISSY. The Extracellular segment spans residues 631 to 805; the sequence is TANLAAFLTV…DKTSALSLSN (175 aa). Phosphoserine is present on Ser645. L-glutamate contacts are provided by Ser668 and Thr669. At Ser710 the chain carries Phosphoserine; by PKC. Glu719 is an L-glutamate binding site. A disulfide bond links Cys732 and Cys787. Residues 806-826 traverse the membrane as a helical segment; the sequence is VAGVFYILIGGLGLAMLVALI. At 827-907 the chain is on the cytoplasmic side; it reads EFCYKSRSES…SGMPLGATGL (81 aa). A lipid anchor (S-palmitoyl cysteine) is attached at Cys829. Residue Ser849 is modified to Phosphoserine; by PKC, PKA and CAMK2. A disordered region spans residues 857-881; the sequence is STLPRNSGAGASGGGGSGENGRVVS. Ser863 carries the phosphoserine; by PKC, PKA and PKG/PRKG2 modification. The segment covering 866-875 has biased composition (gly residues); it reads GASGGGGSGE. The PDZ-binding motif lies at 904–907; that stretch reads ATGL.

The protein belongs to the glutamate-gated ion channel (TC 1.A.10.1) family. GRIA1 subfamily. Homotetramer or heterotetramer of pore-forming glutamate receptor subunits; heteromeric assembly can be the result of both receptor subtype and flip-flop forms and according the composition, one partner can be dominant with respect to the fast desensitizing current component, whereas the other can determine the steady-state component. Tetramers may be formed by the dimerization of dimers. Found in a complex with GRIA2, GRIA3, GRIA4, CNIH2, CNIH3, CACNG2, CACNG3, CACNG4, CACNG5, CACNG7 and CACNG8. Interacts with HIP1 and RASGRF2. Interacts with SYNDIG1 and GRIA2. Interacts with DLG1 (via C-terminus). Interacts with LRFN1. Interacts with PRKG2. Interacts with CNIH2 and CACNG2. Interacts with CACNG5; this interaction modulates the gating. Interacts (via C-terminus) with PDLIM4 (via LIM domain); this interaction as well as the interaction of PDLIM4 with alpha-actinin is required for their colocalization in early endosomes. Interacts with SNX27 (via PDZ domain); the interaction is required for recycling to the plasma membrane when endocytosed and prevent degradation in lysosomes. Interacts (via PDZ-binding motif) with SHANK3 (via PDZ domain). Interacts with CACNG3; associates GRIA1 with the adapter protein complex 4 (AP-4) to target GRIA1 to the somatodendritic compartment of neurons. Interacts with CACNG2; this interaction mediates traffick to the plasma membrane and modulation of desensitization. Interaction with CNIH2 and CNIH3; this interaction promotes expression at the plasma membrane and extensively modulates their gating properties by slowing deactivation and desensitization kinetics. Found in a complex with GRIA2, GRIA3, GRIA4, DLG4, CACNG8 and CNIH2. In terms of processing, phosphorylated at Ser-645. Phosphorylated at Ser-710 by PKC. Phosphorylated at Ser-849 by PKC, PKA and CAMK2. Phosphorylated at Ser-863 by PKC, PKA and PRKG2. Phosphorylation of Ser-863 is reduced by induction of long-term depression and increased by induction of long-term potentiation. Post-translationally, palmitoylated. Depalmitoylated by CPT1C and upon L-glutamate stimulation. ZDHHC3/GODZ specifically palmitoylates Cys-603, which leads to Golgi retention and decreased cell surface expression. In contrast, Cys-829 palmitoylation does not affect cell surface expression but regulates stimulation-dependent endocytosis. In terms of tissue distribution, detected in cerebellum (at protein level).

Its subcellular location is the cell membrane. The protein localises to the endoplasmic reticulum membrane. The protein resides in the postsynaptic cell membrane. It is found in the postsynaptic density membrane. It localises to the cell projection. Its subcellular location is the dendrite. The protein localises to the dendritic spine. The protein resides in the early endosome membrane. It is found in the recycling endosome membrane. It localises to the presynapse. Its subcellular location is the synapse. The catalysed reaction is Ca(2+)(in) = Ca(2+)(out). The enzyme catalyses Na(+)(in) = Na(+)(out). It carries out the reaction Mg(2+)(in) = Mg(2+)(out). It catalyses the reaction Li(+)(in) = Li(+)(out). The catalysed reaction is K(+)(in) = K(+)(out). The enzyme catalyses Sr(2+)(in) = Sr(2+)(out). Glutamate-gated receptor activity inhibited by DNQX (6,7-dinitroquinoxaline-2,3-dione). In terms of biological role, ionotropic glutamate receptor that functions as a ligand-gated cation channel, gated by L-glutamate and glutamatergic agonists such as alpha-amino-3-hydroxy-5-methyl-4-isoxazolepropionic acid (AMPA), quisqualic acid, and kainic acid. L-glutamate acts as an excitatory neurotransmitter at many synapses in the central nervous system. Binding of the excitatory neurotransmitter L-glutamate induces a conformation change, leading to the opening of the cation channel, and thereby converts the chemical signal to an electrical impulse upon entry of monovalent and divalent cations such as sodium and calcium. The receptor then desensitizes rapidly and enters in a transient inactive state, characterized by the presence of bound agonist. In the presence of CACNG2 or CACNG4 or CACNG7 or CACNG8, shows resensitization which is characterized by a delayed accumulation of current flux upon continued application of L-glutamate. Resensitization is blocked by CNIH2 through interaction with CACNG8 in the CACNG8-containing AMPA receptors complex. Calcium (Ca(2+)) permeability depends on subunits composition and, heteromeric channels containing edited GRIA2 subunit are calcium-impermeable. Also permeable to other divalents cations such as strontium(2+) and magnesium(2+) and monovalent cations such as potassium(1+) and lithium(1+). In Rattus norvegicus (Rat), this protein is Glutamate receptor 1.